Consider the following 381-residue polypeptide: Mannitol-1-phosphate 5-dehydrogenase (381 aa).

Residue alanine 3–glycine 14 participates in NAD(+) binding.

This sequence belongs to the mannitol dehydrogenase family.

It carries out the reaction D-mannitol 1-phosphate + NAD(+) = beta-D-fructose 6-phosphate + NADH + H(+). In Exiguobacterium sibiricum (strain DSM 17290 / CCUG 55495 / CIP 109462 / JCM 13490 / 255-15), this protein is Mannitol-1-phosphate 5-dehydrogenase.